Consider the following 61-residue polypeptide: Large ribosomal subunit protein uL30 (61 aa).

This sequence belongs to the universal ribosomal protein uL30 family. As to quaternary structure, part of the 50S ribosomal subunit.

The chain is Large ribosomal subunit protein uL30 from Thermosipho africanus (strain TCF52B).